A 702-amino-acid chain; its full sequence is Polyribonucleotide nucleotidyltransferase (702 aa).

The Mg(2+) site is built by Asp-484 and Asp-490. Residues 551–610 (PHIESFKIAVEKIGALIGPGGKTVKSLSDQYRVTINTDSDGTVTVSGRDAQSVFDAKVAV) form the KH domain. The S1 motif domain occupies 620 to 688 (GRVYQGVVKR…RMGRLNLSYI (69 aa)).

It belongs to the polyribonucleotide nucleotidyltransferase family. It depends on Mg(2+) as a cofactor.

The protein resides in the cytoplasm. It carries out the reaction RNA(n+1) + phosphate = RNA(n) + a ribonucleoside 5'-diphosphate. Involved in mRNA degradation. Catalyzes the phosphorolysis of single-stranded polyribonucleotides processively in the 3'- to 5'-direction. The protein is Polyribonucleotide nucleotidyltransferase of Treponema pallidum (strain Nichols).